Consider the following 355-residue polypeptide: UDP-N-acetylglucosamine--N-acetylmuramyl-(pentapeptide) pyrophosphoryl-undecaprenol N-acetylglucosamine transferase (355 aa).

Residues 15-17 (TGG), Asn127, Arg163, Ser191, Ile244, 263-268 (ALTVSE), and Gln288 each bind UDP-N-acetyl-alpha-D-glucosamine.

This sequence belongs to the glycosyltransferase 28 family. MurG subfamily.

It is found in the cell inner membrane. It carries out the reaction di-trans,octa-cis-undecaprenyl diphospho-N-acetyl-alpha-D-muramoyl-L-alanyl-D-glutamyl-meso-2,6-diaminopimeloyl-D-alanyl-D-alanine + UDP-N-acetyl-alpha-D-glucosamine = di-trans,octa-cis-undecaprenyl diphospho-[N-acetyl-alpha-D-glucosaminyl-(1-&gt;4)]-N-acetyl-alpha-D-muramoyl-L-alanyl-D-glutamyl-meso-2,6-diaminopimeloyl-D-alanyl-D-alanine + UDP + H(+). The protein operates within cell wall biogenesis; peptidoglycan biosynthesis. In terms of biological role, cell wall formation. Catalyzes the transfer of a GlcNAc subunit on undecaprenyl-pyrophosphoryl-MurNAc-pentapeptide (lipid intermediate I) to form undecaprenyl-pyrophosphoryl-MurNAc-(pentapeptide)GlcNAc (lipid intermediate II). The protein is UDP-N-acetylglucosamine--N-acetylmuramyl-(pentapeptide) pyrophosphoryl-undecaprenol N-acetylglucosamine transferase of Escherichia coli O157:H7.